The following is a 203-amino-acid chain: Outer-membrane lipoprotein carrier protein (203 aa).

The signal sequence occupies residues 1–21 (MKKLAITCALLSGMVVSQVWA).

It belongs to the LolA family. Monomer.

It localises to the periplasm. Functionally, participates in the translocation of lipoproteins from the inner membrane to the outer membrane. Only forms a complex with a lipoprotein if the residue after the N-terminal Cys is not an aspartate (The Asp acts as a targeting signal to indicate that the lipoprotein should stay in the inner membrane). The protein is Outer-membrane lipoprotein carrier protein of Klebsiella pneumoniae subsp. pneumoniae (strain ATCC 700721 / MGH 78578).